The following is a 502-amino-acid chain: Galactose/methyl galactoside import ATP-binding protein MglA (502 aa).

ABC transporter domains follow at residues Leu-10–Glu-245 and Asn-255–Leu-502. Gly-42 to Ser-49 is a binding site for ATP.

The protein belongs to the ABC transporter superfamily. Galactose/methyl galactoside importer (TC 3.A.1.2.3) family. The complex is composed of one ATP-binding protein (MglA), two transmembrane proteins (MglC) and a solute-binding protein (MglB).

It is found in the cell inner membrane. It carries out the reaction D-galactose(out) + ATP + H2O = D-galactose(in) + ADP + phosphate + H(+). The catalysed reaction is methyl beta-D-galactoside(out) + ATP + H2O = methyl beta-D-galactoside(in) + ADP + phosphate + H(+). In terms of biological role, part of the ABC transporter complex MglABC involved in galactose/methyl galactoside import. Responsible for energy coupling to the transport system. This chain is Galactose/methyl galactoside import ATP-binding protein MglA, found in Vibrio vulnificus (strain CMCP6).